The primary structure comprises 180 residues: Crossover junction endodeoxyribonuclease RuvC (180 aa).

Active-site residues include Asp-9, Glu-74, and Asp-146. Mg(2+) is bound by residues Asp-9, Glu-74, and Asp-146.

This sequence belongs to the RuvC family. As to quaternary structure, homodimer which binds Holliday junction (HJ) DNA. The HJ becomes 2-fold symmetrical on binding to RuvC with unstacked arms; it has a different conformation from HJ DNA in complex with RuvA. In the full resolvosome a probable DNA-RuvA(4)-RuvB(12)-RuvC(2) complex forms which resolves the HJ. Requires Mg(2+) as cofactor.

Its subcellular location is the cytoplasm. The enzyme catalyses Endonucleolytic cleavage at a junction such as a reciprocal single-stranded crossover between two homologous DNA duplexes (Holliday junction).. In terms of biological role, the RuvA-RuvB-RuvC complex processes Holliday junction (HJ) DNA during genetic recombination and DNA repair. Endonuclease that resolves HJ intermediates. Cleaves cruciform DNA by making single-stranded nicks across the HJ at symmetrical positions within the homologous arms, yielding a 5'-phosphate and a 3'-hydroxyl group; requires a central core of homology in the junction. The consensus cleavage sequence is 5'-(A/T)TT(C/G)-3'. Cleavage occurs on the 3'-side of the TT dinucleotide at the point of strand exchange. HJ branch migration catalyzed by RuvA-RuvB allows RuvC to scan DNA until it finds its consensus sequence, where it cleaves and resolves the cruciform DNA. The chain is Crossover junction endodeoxyribonuclease RuvC from Methylobacillus flagellatus (strain ATCC 51484 / DSM 6875 / VKM B-1610 / KT).